The sequence spans 754 residues: Elongation factor G-2, mitochondrial (754 aa).

The tr-type G domain maps to D63–N340. GTP-binding positions include A72–T79, D139–H143, and N193–D196.

Belongs to the TRAFAC class translation factor GTPase superfamily. Classic translation factor GTPase family. EF-G/EF-2 subfamily. Expressed in cotyledons and adult leaves at the same levels.

Its subcellular location is the mitochondrion. Its pathway is protein biosynthesis; polypeptide chain elongation. Functionally, mitochondrial GTPase that catalyzes the GTP-dependent ribosomal translocation step during translation elongation. During this step, the ribosome changes from the pre-translocational (PRE) to the post-translocational (POST) state as the newly formed A-site-bound peptidyl-tRNA and P-site-bound deacylated tRNA move to the P and E sites, respectively. Catalyzes the coordinated movement of the two tRNA molecules, the mRNA and conformational changes in the ribosome. The protein is Elongation factor G-2, mitochondrial (MEFG2) of Arabidopsis thaliana (Mouse-ear cress).